The primary structure comprises 184 residues: 20.9 kDa protein (184 aa).

This chain is 20.9 kDa protein, found in Zymomonas mobilis subsp. mobilis (strain ATCC 10988 / DSM 424 / LMG 404 / NCIMB 8938 / NRRL B-806 / ZM1).